A 107-amino-acid polypeptide reads, in one-letter code: High mobility group protein HMG-I/HMG-Y (107 aa).

Positions M1–A13 are enriched in polar residues. A disordered region spans residues M1–Q107. N-acetylserine is present on S2. The residue at position 7 (K7) is an N6-acetyllysine. S8 bears the ADP-ribosylserine mark. The residue at position 9 (S9) is an ADP-ribosylserine; alternate. Phosphoserine; alternate is present on S9. At K15 the chain carries N6-acetyllysine; alternate. Residue K15 forms a Glycyl lysine isopeptide (Lys-Gly) (interchain with G-Cter in SUMO2); alternate linkage. The segment covering K15 to R24 has biased composition (basic and acidic residues). The a.T hook 1 DNA-binding region spans T21–K31. R26 bears the Asymmetric dimethylarginine; alternate mark. R26 carries the post-translational modification Omega-N-methylarginine; alternate. R26 is subject to Symmetric dimethylarginine; alternate. Phosphoserine; by HIPK2 and CDC2 is present on S36. T39 carries the phosphothreonine modification. Phosphoserine is present on residues S44 and S49. The residue at position 53 (T53) is a Phosphothreonine; by HIPK2 and CDC2. DNA-binding regions (a.T hook) lie at residues T53 to G63 and A78 to K89. The tract at residues T53 to T77 is interaction with HIPK2. A compositionally biased stretch (basic residues) spans K55 to K74. Asymmetric dimethylarginine; by PRMT6; alternate is present on residues R58 and R60. Omega-N-methylarginine; by PRMT6; alternate is present on residues R58 and R60. Residues E93 to Q107 show a composition bias toward acidic residues. S99, S102, and S103 each carry phosphoserine.

It belongs to the HMGA family. As to quaternary structure, interacts with HIPK2. Isoforms HMG-I and HMG-Y can be phosphorylated by HIPK2. Phosphorylation may modulate DNA-binding affinity. In terms of processing, methylation at Arg-58 is mutually exclusive with methylation at Arg-60.

The protein localises to the nucleus. It is found in the chromosome. In terms of biological role, HMG-I/Y bind preferentially to the minor groove of A+T rich regions in double-stranded DNA. It is suggested that these proteins could function in nucleosome phasing and in the 3'-end processing of mRNA transcripts. They are also involved in the transcription regulation of genes containing, or in close proximity to A+T-rich regions. The polypeptide is High mobility group protein HMG-I/HMG-Y (Hmga1) (Mus musculus (Mouse)).